We begin with the raw amino-acid sequence, 628 residues long: 1-deoxy-D-xylulose-5-phosphate synthase (628 aa).

Thiamine diphosphate is bound by residues histidine 72 and glycine 113 to serine 115. Aspartate 144 serves as a coordination point for Mg(2+). Thiamine diphosphate is bound by residues glycine 145 to alanine 146, asparagine 173, tyrosine 284, and glutamate 366. Asparagine 173 contributes to the Mg(2+) binding site.

This sequence belongs to the transketolase family. DXPS subfamily. Homodimer. It depends on Mg(2+) as a cofactor. Requires thiamine diphosphate as cofactor.

It carries out the reaction D-glyceraldehyde 3-phosphate + pyruvate + H(+) = 1-deoxy-D-xylulose 5-phosphate + CO2. Its pathway is metabolic intermediate biosynthesis; 1-deoxy-D-xylulose 5-phosphate biosynthesis; 1-deoxy-D-xylulose 5-phosphate from D-glyceraldehyde 3-phosphate and pyruvate: step 1/1. In terms of biological role, catalyzes the acyloin condensation reaction between C atoms 2 and 3 of pyruvate and glyceraldehyde 3-phosphate to yield 1-deoxy-D-xylulose-5-phosphate (DXP). The sequence is that of 1-deoxy-D-xylulose-5-phosphate synthase from Shouchella clausii (strain KSM-K16) (Alkalihalobacillus clausii).